The sequence spans 114 residues: uncharacterized protein (114 aa).

Residues Cys40, Cys106, and Cys108 each coordinate Fe cation.

This sequence belongs to the HesB/IscA family. Ycf83 subfamily.

It is found in the plastid. The protein resides in the chloroplast. This is an uncharacterized protein from Pyropia yezoensis (Susabi-nori).